Reading from the N-terminus, the 1097-residue chain is MGDPLERLGSQASMATESVMKEDLCLEIDPPLTESVATAEDWRRALGKVVPAVVVLRTTACRAFDTESAGASYATGFIVDKRRGIILTNRHVVKPGPVVAEAMFVNREEIPIYPVYRDPVHDFGFFCYDPSAVQFLTYQEIPLAPEAASVGLEIRVVGNDSGEKVSILAGTLARLDRDAPHYKKDGYNDFNTFYMQAASGTKGGSSGSPVIDWQGRAVALNAGSKSSSASAFFLPLQRVVRALSFLQKSIDSRTDKPKAVHIPRGTLQMTFLHKGFDEIRRLGLRSETEQVVRHASPTGETGMLVVDSVVPSGPADKHLEPGDVLVRVNGTVLTQFLNLENLLDDGVGQILELEIERGGQPLSVSVSVQDLHSITPDHFLEVSGAVIHPLSYQQARNFRFPCGLAYVADPGYMLFRAGVPRHAIIKKVANEDISSLGDLVSVLSKLSRGARVPLEYMSHTDRHRKKSVLVTIDHHEWYAPPQLYTRNDSSGLWDAKPAIEPASVSPSIGNNGFPISQDISLCHHDTEPMHEVNVRGVTDIAAIMETSSGDGSQNDFGSEAKKQRVDEDSSDGIAANGSLYGSEFKSDDAMETDTTVLRDFEGATALSANASLAERAIEPALVMFEVHVPPSCSLDGVHSQHFFGTGIIIYHSSNMGLAVVDKNTVAISASDVMLSFAAFPVEIPGEVVFLHPVHNYALIAYNPSAMDPASASVIRAAELLPEPALQRGDSVYLVGLSRNLQATSRKSIVTNPCAALNIGSADSPRYRATNMEVIELDTDFGSSFSGALTDEQGRIRAIWGSFSTQVKYSSTSSEDHQFVRGIPVYAISQVLEKIITGGNGPALLINGVKRPMPLVRILEVELYPTLLSKARSFGLSDEWIQVLVKKDPVRRQVLRVKGCLAGSKAENLLEQGDMVLAVNKMPVTCFNDIEAACQTLDKGSYSDENLNLTILRQGQELELVVGTDKRDGNGTTRVINWCGCVVQDPHPAVRALGFLPEEGHGVYVTRWCHGSPAHRYGLYALQWIVEVNGKKTPDLNAFADATKELEHGQFVRIRTVHLNGKPRVLTLKQDLHYWPTWELRFDPETALWRRNILKALQ.

Positions 55–243 (VLRTTACRAF…LPLQRVVRAL (189 aa)) are serine protease. The region spanning 269–366 (MTFLHKGFDE…RGGQPLSVSV (98 aa)) is the PDZ domain. His524 acts as the Charge relay system in catalysis. The span at 546-556 (TSSGDGSQNDF) shows a compositional bias: polar residues. Residues 546 to 577 (TSSGDGSQNDFGSEAKKQRVDEDSSDGIAANG) form a disordered region. Positions 558-567 (SEAKKQRVDE) are enriched in basic and acidic residues. Ser785 (charge relay system) is an active-site residue.

It belongs to the peptidase S1C family.

It is found in the cytoplasm. Functionally, probable serine protease. This is Protease Do-like 7 (DEGP7) from Arabidopsis thaliana (Mouse-ear cress).